The sequence spans 79 residues: MSREVVVKVKVPSHYVGDIEREVKLAYAVDLFLRGIVSVERAAELAGMSLYDFLVELRRRRIQAYPYSDEELREELGIE.

It belongs to the UPF0175 family.

This Aeropyrum pernix (strain ATCC 700893 / DSM 11879 / JCM 9820 / NBRC 100138 / K1) protein is UPF0175 protein APE_0890a.1.